The following is a 242-amino-acid chain: Succinyl-CoA:3-ketoacid coenzyme A transferase subunit A (242 aa).

33-39 is a binding site for CoA; sequence GGFGLCG.

This sequence belongs to the 3-oxoacid CoA-transferase subunit A family. As to quaternary structure, heterodimer of a subunit A and a subunit B.

The enzyme catalyses a 3-oxo acid + succinyl-CoA = a 3-oxoacyl-CoA + succinate. It participates in bacterial outer membrane biogenesis; lipopolysaccharide biosynthesis. This is Succinyl-CoA:3-ketoacid coenzyme A transferase subunit A (lpsI) from Xanthomonas campestris pv. campestris (strain ATCC 33913 / DSM 3586 / NCPPB 528 / LMG 568 / P 25).